The sequence spans 311 residues: MEKINNVTEFIFWGLSQSPEIEKVCFVVFSFFYIIILLGNLLIMLTVCLSNLFKSPMYFFLSFLSFVDICYSSVTAPKMIVDLLAKDKTISYVGCMLQLFGVHFFGCTEIFILTVMAYDRYVAICKPLHYMTIMNRETCNKMLLGTWVGGFLHSIIQVALVVQLPFCGPNEIDHYFCDVHPVLKLACTETYIVGVVVTANSGTIALGSFVILLISYSIILVSLRKQSAEGRRKALSTCGSHIAMVVIFFGPCTFMYMRPDTTFSEDKMVAVFYTIITPMLNPLIYTLRNAEVKNAMKKLWGRNVFLEAKGK.

The Extracellular segment spans residues 1 to 23 (MEKINNVTEFIFWGLSQSPEIEK). Residue N6 is glycosylated (N-linked (GlcNAc...) asparagine). A helical membrane pass occupies residues 24–47 (VCFVVFSFFYIIILLGNLLIMLTV). Residues 48-55 (CLSNLFKS) are Cytoplasmic-facing. Residues 56-77 (PMYFFLSFLSFVDICYSSVTAP) form a helical membrane-spanning segment. The Extracellular segment spans residues 78 to 98 (KMIVDLLAKDKTISYVGCMLQ). C95 and C187 are disulfide-bonded. Residues 99-118 (LFGVHFFGCTEIFILTVMAY) form a helical membrane-spanning segment. The Cytoplasmic portion of the chain corresponds to 119–137 (DRYVAICKPLHYMTIMNRE). The chain crosses the membrane as a helical span at residues 138–156 (TCNKMLLGTWVGGFLHSII). The Extracellular portion of the chain corresponds to 157-193 (QVALVVQLPFCGPNEIDHYFCDVHPVLKLACTETYIV). Residues 194-217 (GVVVTANSGTIALGSFVILLISYS) traverse the membrane as a helical segment. Residues 218-233 (IILVSLRKQSAEGRRK) lie on the Cytoplasmic side of the membrane. The chain crosses the membrane as a helical span at residues 234–256 (ALSTCGSHIAMVVIFFGPCTFMY). Residues 257-267 (MRPDTTFSEDK) are Extracellular-facing. A helical transmembrane segment spans residues 268-287 (MVAVFYTIITPMLNPLIYTL). Over 288-311 (RNAEVKNAMKKLWGRNVFLEAKGK) the chain is Cytoplasmic.

It belongs to the G-protein coupled receptor 1 family.

The protein localises to the cell membrane. Functionally, odorant receptor. This chain is Olfactory receptor 4S2 (OR4S2), found in Homo sapiens (Human).